Reading from the N-terminus, the 522-residue chain is MVVSADCRISLSAPSCIRSSSTGLTRHIKLGSFCNGELMGKKLNLSQLPNIRLRSSTNFSQKRILMSLNSVAGESKVQELETEKRDPRTVASIILGGGAGTRLFPLTKRRAKPAVPIGGAYRLIDVPMSNCINSGINKVYILTQYNSASLNRHLARAYNSNGLGFGDGYVEVLAATQTPGESGKRWFQGTADAVRQFHWLFEDARSKDIEDVLILSGDHLYRMDYMDFIQDHRQSGADISISCIPIDDRRASDFGLMKIDDKGRVISFSEKPKGDDLKAMAVDTTILGLSKEEAEKKPYIASMGVYVFKKEILLNLLRWRFPTANDFGSEIIPFSAKEFYVNAYLFNDYWEDIGTIRSFFEANLALTEHPGAFSFYDAAKPIYTSRRNLPPSKIDNSKLIDSIISHGSFLTNCLIEHSIVGIRSRVGSNVQLKDTVMLGADYYETEAEVAALLAEGNVPIGIGENTKIQECIIDKNARVGKNVIIANSEGIQEADRSSDGFYIRSGITVILKNSVIKDGVVI.

A chloroplast-targeting transit peptide spans 1–54 (MVVSADCRISLSAPSCIRSSSTGLTRHIKLGSFCNGELMGKKLNLSQLPNIRLR). Ser428 is subject to Phosphoserine.

This sequence belongs to the bacterial/plant glucose-1-phosphate adenylyltransferase family. Heterotetramer. As to expression, leaves.

The protein localises to the plastid. Its subcellular location is the chloroplast. The catalysed reaction is alpha-D-glucose 1-phosphate + ATP + H(+) = ADP-alpha-D-glucose + diphosphate. Its pathway is glycan biosynthesis; starch biosynthesis. Its activity is regulated as follows. Activated by 3'phosphoglycerate, inhibited by orthophosphate. Allosteric regulation. In terms of biological role, this protein plays a role in synthesis of starch. It catalyzes the synthesis of the activated glycosyl donor, ADP-glucose from Glc-1-P and ATP. The sequence is that of Glucose-1-phosphate adenylyltransferase large subunit 1, chloroplastic (ADG2) from Arabidopsis thaliana (Mouse-ear cress).